A 728-amino-acid chain; its full sequence is Propionyl-CoA carboxylase alpha chain, mitochondrial (728 aa).

Residues 1–52 (MAGFWVGTAPLVAAGRRGRWPPQQLMLSAALRTLKHVLYYSRQCLMVSRNLG) constitute a mitochondrion transit peptide. In terms of domain architecture, Biotin carboxylation spans 62–509 (TFDKILVANR…STKFLSDVYP (448 aa)). Lys-65 carries the N6-acetyllysine; alternate modification. An N6-succinyllysine; alternate modification is found at Lys-65. Lys-119 bears the N6-succinyllysine mark. Lys-150 carries the post-translational modification N6-acetyllysine; alternate. Lys-150 is subject to N6-succinyllysine; alternate. Lys-177 is an ATP binding site. The 198-residue stretch at 181 to 378 (KLLAKKAEVN…LVQEMIRVAK (198 aa)) folds into the ATP-grasp domain. Lys-200 is modified (N6-acetyllysine; alternate). Lys-200 carries the N6-succinyllysine; alternate modification. Residues 209-270 (AREI…PRHI), Glu-261, and Asn-296 each bind ATP. Ser-252 carries the phosphoserine modification. Position 262 is an N6-succinyllysine (Lys-262). Lys-328 carries the post-translational modification N6-acetyllysine; alternate. At Lys-328 the chain carries N6-succinyllysine; alternate. 3 residues coordinate Mg(2+): Glu-336, Glu-349, and Asn-351. The Mn(2+) site is built by Glu-336, Glu-349, and Asn-351. Residue Glu-349 is part of the active site. 2 positions are modified to N6-succinyllysine: Lys-385 and Lys-407. Phe-409 lines the biotin pocket. Position 496 is an N6-acetyllysine (Lys-496). N6-succinyllysine is present on residues Lys-502, Lys-513, and Lys-648. The Biotinyl-binding domain occupies 653–728 (KVTEDTSSVL…GEGDLLVELE (76 aa)). Residue Lys-694 is modified to N6-biotinyllysine; by HLCS.

As to quaternary structure, the holoenzyme is a dodecamer composed of 6 PCCA/alpha subunits and 6 PCCB/beta subunits. Interacts (via the biotin carboxylation domain) with SIRT4. Interacts with SIRT3 and SIRT5. It depends on Mg(2+) as a cofactor. Requires Mn(2+) as cofactor. The cofactor is biotin. In terms of processing, acetylated. Post-translationally, the biotin cofactor is covalently attached to the C-terminal biotinyl-binding domain and is required for the catalytic activity. Biotinylation is catalyzed by HLCS.

It localises to the mitochondrion matrix. It carries out the reaction propanoyl-CoA + hydrogencarbonate + ATP = (S)-methylmalonyl-CoA + ADP + phosphate + H(+). It catalyses the reaction butanoyl-CoA + hydrogencarbonate + ATP = (2S)-ethylmalonyl-CoA + ADP + phosphate + H(+). Its pathway is metabolic intermediate metabolism; propanoyl-CoA degradation; succinyl-CoA from propanoyl-CoA: step 1/3. Functionally, this is one of the 2 subunits of the biotin-dependent propionyl-CoA carboxylase (PCC), a mitochondrial enzyme involved in the catabolism of odd chain fatty acids, branched-chain amino acids isoleucine, threonine, methionine, and valine and other metabolites. Propionyl-CoA carboxylase catalyzes the carboxylation of propionyl-CoA/propanoyl-CoA to D-methylmalonyl-CoA/(S)-methylmalonyl-CoA. Within the holoenzyme, the alpha subunit catalyzes the ATP-dependent carboxylation of the biotin carried by the biotin carboxyl carrier (BCC) domain, while the beta subunit then transfers the carboxyl group from carboxylated biotin to propionyl-CoA. Propionyl-CoA carboxylase also significantly acts on butyryl-CoA/butanoyl-CoA, which is converted to ethylmalonyl-CoA/(2S)-ethylmalonyl-CoA at a much lower rate. Other alternative minor substrates include (2E)-butenoyl-CoA/crotonoyl-CoA. The chain is Propionyl-CoA carboxylase alpha chain, mitochondrial from Homo sapiens (Human).